The chain runs to 126 residues: Small ribosomal subunit protein uS12 (126 aa).

The segment at 1-28 is disordered; the sequence is MPTINQLVRKGRQSETTKSKSPALQDCP. Position 89 is a 3-methylthioaspartic acid (D89). Residues 103–126 form a disordered region; sequence DTQGVKDRKQARSKYGAKRAKAAK. Residues 113–126 show a composition bias toward basic residues; that stretch reads ARSKYGAKRAKAAK.

The protein belongs to the universal ribosomal protein uS12 family. Part of the 30S ribosomal subunit. Contacts proteins S8 and S17. May interact with IF1 in the 30S initiation complex.

With S4 and S5 plays an important role in translational accuracy. Functionally, interacts with and stabilizes bases of the 16S rRNA that are involved in tRNA selection in the A site and with the mRNA backbone. Located at the interface of the 30S and 50S subunits, it traverses the body of the 30S subunit contacting proteins on the other side and probably holding the rRNA structure together. The combined cluster of proteins S8, S12 and S17 appears to hold together the shoulder and platform of the 30S subunit. The sequence is that of Small ribosomal subunit protein uS12 from Burkholderia orbicola (strain MC0-3).